The sequence spans 494 residues: MFS-type transporter lnaF (494 aa).

Positions 1-51 (MTYDPENAMGEARADAPVEAEKEHEATQTTVKESTLGYDNSSDPSRRDSYR) are disordered. Positions 12–26 (ARADAPVEAEKEHEA) are enriched in basic and acidic residues. Residues N40, N58, and N68 are each glycosylated (N-linked (GlcNAc...) asparagine). 10 helical membrane passes run 105–125 (SLLIGAILGVLALGYTSDMFS), 128–148 (AGLLFTSGLVAIGTLMSTLAL), 156–176 (MLWYFVIVRGIAGFGVGGEYP), 203–223 (TLMATSAAPIQMIVYLICLIA), 228–248 (LPVTFHAIYSIATILPVIIMV), 290–310 (LAFFLYDFINFPNSIMSSTII), 323–343 (AIWQVILGALPVPGVIVGAWL), 354–374 (ILGFAGYMVLGFVIGGTFPHL), 383–403 (VLYGLLQALGHMGPGATIGLI), and 446–466 (STFYLAGGIAILGMIVYWFLP).

The protein belongs to the major facilitator superfamily. Sugar transporter (TC 2.A.1.1) family.

The protein localises to the cell membrane. In terms of biological role, MFS-type transporter; part of the lna gene cluster that mediates the biosynthesis of diastereomeric piperazines. Lna and lnb clusters encode sets of enzymes that produce overlapping sets of previously undescribed metabolites such as piperazinomycin-like metabolites or morpholine. The lna and lnb biosynthetic pathways appear to be part of a signaling network that controls the formation of sclerotia, a resilient overwintering structure. May be involved in the secretion of the metabolites produced by the lna and lnb clusters. The protein is MFS-type transporter lnaF of Aspergillus flavus (strain ATCC 200026 / FGSC A1120 / IAM 13836 / NRRL 3357 / JCM 12722 / SRRC 167).